We begin with the raw amino-acid sequence, 45 residues long: Osteocalcin (45 aa).

The 44-residue stretch at 1–44 (AGTAXGDLTPFQLESLREVCEVNLACEHMADTXGIVAAYTAYYG) folds into the Gla domain. Positions 14, 18, 21, and 27 each coordinate Ca(2+). E14, E18, and E21 each carry 4-carboxyglutamate. C20 and C26 are joined by a disulfide.

This sequence belongs to the osteocalcin/matrix Gla protein family. Post-translationally, gamma-carboxyglutamate residues are formed by vitamin K dependent carboxylation by GGCX. These residues are essential for the binding of calcium.

The protein localises to the secreted. The carboxylated form is one of the main organic components of the bone matrix, which constitutes 1-2% of the total bone protein. The carboxylated form binds strongly to apatite and calcium. The polypeptide is Osteocalcin (bglap) (Danio rerio (Zebrafish)).